Consider the following 291-residue polypeptide: N-acetylmannosamine kinase (291 aa).

ATP contacts are provided by residues 5-12 (AIDIGGTK) and 132-139 (GVGGGVVS). Zn(2+) is bound by residues histidine 156, cysteine 166, cysteine 168, and cysteine 173.

The protein belongs to the ROK (NagC/XylR) family. NanK subfamily. In terms of assembly, homodimer.

It catalyses the reaction an N-acyl-D-mannosamine + ATP = an N-acyl-D-mannosamine 6-phosphate + ADP + H(+). It functions in the pathway amino-sugar metabolism; N-acetylneuraminate degradation; D-fructose 6-phosphate from N-acetylneuraminate: step 2/5. In terms of biological role, catalyzes the phosphorylation of N-acetylmannosamine (ManNAc) to ManNAc-6-P. The sequence is that of N-acetylmannosamine kinase (nanK1) from Escherichia coli O6:H1 (strain CFT073 / ATCC 700928 / UPEC).